A 419-amino-acid polypeptide reads, in one-letter code: Coiled-coil domain-containing protein 85C (419 aa).

An N-acetylalanine modification is found at alanine 2. 2 coiled-coil regions span residues 22–88 and 118–159; these read ELLR…RELC and HEVA…AALA. 2 disordered regions span residues 162-268 and 307-348; these read GAAS…DPSS and HSES…AGQK. Over residues 164-175 the composition is skewed to gly residues; the sequence is ASGGGGGGGGAG. Residues 176–189 are compositionally biased toward low complexity; that stretch reads SRSSIDSQASLSGP. The residue at position 178 (serine 178) is a Phosphoserine. The segment covering 224 to 233 has biased composition (pro residues); the sequence is PPPLLPPGPH. Phosphoserine is present on serine 246. Residues 307–325 are compositionally biased toward polar residues; the sequence is HSESQLASLPPSYQDSLQN. A compositionally biased stretch (pro residues) spans 329 to 338; it reads CPAPELPSPP.

This sequence belongs to the CCDC85 family. May interact with ARVCF, CTNND1, CTNND2 and PKP4.

Its subcellular location is the cell junction. It is found in the tight junction. It localises to the adherens junction. Functionally, may play a role in cell-cell adhesion and epithelium development through its interaction with proteins of the beta-catenin family. May play an important role in cortical development, especially in the maintenance of radial glia. This Homo sapiens (Human) protein is Coiled-coil domain-containing protein 85C (CCDC85C).